Reading from the N-terminus, the 125-residue chain is MKAIKIAMVGAALVWSASAYAAGDPVKGEQVFKQCKICHQVGPTAKPGVGPVQNNVVGSKAGSRPGFNYSDAMKNSGLTWDEATLDKYLENPKAVVPGTKMVFVGLKNPQDRADVIAFLATQHGQ.

Residues Met1–Ala21 form the signal peptide. Residues Gly23–His123 enclose the Cytochrome c domain. Residues Cys35, Cys38, His39, and Met101 each coordinate heme c.

It belongs to the cytochrome c family. Binds 1 heme c group covalently per subunit.

Functionally, cytochrome c2 is found mainly in purple, non-sulfur, photosynthetic bacteria where it functions as the electron donor to the oxidized bacteriochlorophyll in the photophosphorylation pathway. However, it may also have a role in the respiratory chain and is found in some non-photosynthetic bacteria. In Rhodomicrobium vannielii (strain ATCC 17100 / DSM 162 / LMG 4299 / NCIMB 10020 / ATH 3.1.1), this protein is Cytochrome c2.